The sequence spans 399 residues: Beta-1,6-galactosyltransferase GALT31A (399 aa).

Residues Met1 to Ser12 are Cytoplasmic-facing. The helical; Signal-anchor for type II membrane protein transmembrane segment at Gly13–Asn35 threads the bilayer. Residues Arg36–Phe399 lie on the Lumenal side of the membrane.

Belongs to the glycosyltransferase 31 family. As to quaternary structure, interacts with GALT29A. Requires Mn(2+) as cofactor.

The protein localises to the golgi apparatus membrane. It participates in protein modification; protein glycosylation. Beta-galactosyltransferase involved in elongation of beta-1,6-linked galactan side chains on arabinogalactan proteins. Required for the progression of embryogenesis beyond the globular stage. Beta-galactosyltransferase involved in the biosynthesis of type II arabinogalactan. Transfers galactose from UDP-galactose to a mixture of various oligosaccharides derived from arabinogalactan proteins. Forms a complex with GALT29A that can work cooperatively to enhance the activities of adding galactose residues at O6 positions to beta-1,6-linked galactan and beta-1,3-linked galactan. In Arabidopsis thaliana (Mouse-ear cress), this protein is Beta-1,6-galactosyltransferase GALT31A.